The following is a 274-amino-acid chain: Ubiquinone biosynthesis protein COQ4 homolog, mitochondrial (274 aa).

Residues 1–20 (MLRQTAFRSMKLNRTPGRYF) constitute a mitochondrion transit peptide. The tract at residues 13–40 (NRTPGRYFTTAENMDTGSSQSPPDTEQK) is disordered. The span at 22-36 (TAENMDTGSSQSPPD) shows a compositional bias: polar residues. Residues His-177, Asp-178, His-181, and Glu-193 each coordinate Zn(2+).

This sequence belongs to the COQ4 family. As to quaternary structure, component of a multi-subunit COQ enzyme complex. The cofactor is Zn(2+).

The protein resides in the mitochondrion inner membrane. The catalysed reaction is a 4-hydroxy-3-methoxy-5-(all-trans-polyprenyl)benzoate + H(+) = a 2-methoxy-6-(all-trans-polyprenyl)phenol + CO2. It functions in the pathway cofactor biosynthesis; ubiquinone biosynthesis. Lyase that catalyzes the C1-decarboxylation of 4-hydroxy-3-methoxy-5-(all-trans-polyprenyl)benzoic acid into 2-methoxy-6-(all-trans-polyprenyl)phenol during ubiquinone biosynthesis. The chain is Ubiquinone biosynthesis protein COQ4 homolog, mitochondrial from Aedes aegypti (Yellowfever mosquito).